A 1477-amino-acid polypeptide reads, in one-letter code: Alpha-1-inhibitor 3 (1477 aa).

The first 24 residues, 1–24, serve as a signal peptide directing secretion; that stretch reads MKKDREAQLCLFSALLAFLPFASL. A disulfide bridge links cysteine 48 with cysteine 86. 2 N-linked (GlcNAc...) asparagine glycosylation sites follow: asparagine 55 and asparagine 247. 2 cysteine pairs are disulfide-bonded: cysteine 251–cysteine 295 and cysteine 269–cysteine 283. Residues asparagine 301, asparagine 321, asparagine 393, and asparagine 508 are each glycosylated (N-linked (GlcNAc...) asparagine). Intrachain disulfides connect cysteine 468–cysteine 563, cysteine 595–cysteine 774, and cysteine 643–cysteine 678. Residues 601 to 750 are bait region (approximate); that stretch reads DQSVLLQKPE…TWIWDLVTVN (150 aa). 3 N-linked (GlcNAc...) asparagine glycosylation sites follow: asparagine 750, asparagine 777, and asparagine 872. Disulfide bonds link cysteine 850/cysteine 886, cysteine 924/cysteine 1324, cysteine 1082/cysteine 1130, and cysteine 1355/cysteine 1470. The segment at residues 975–978 is a cross-link (isoglutamyl cysteine thioester (Cys-Gln)); it reads CGEQ. The N-linked (GlcNAc...) asparagine glycan is linked to asparagine 994. 3 N-linked (GlcNAc...) asparagine glycosylation sites follow: asparagine 1143, asparagine 1314, and asparagine 1427.

This sequence belongs to the protease inhibitor I39 (alpha-2-macroglobulin) family. In terms of assembly, monomer.

It is found in the secreted. Its function is as follows. Protease inhibitor with a wide spectrum of protein targets, which attaches through its thioester function. The protein is Alpha-1-inhibitor 3 (A1i3) of Rattus norvegicus (Rat).